The primary structure comprises 217 residues: MAEVKLLGLRYSPFSHRVEWALKIKGVKYEFIEEDLQNKSPLLLQSNPIHKKIPVLIHNGKCICESMVILEYIDEAFEGPSILPKDPYDRALARFWAKYVEDKGAAVWKSFFSKGEEQEKAKEEAYEMLKILDNEFKDKKCFVGDKFGFADIVANGAALYLGILEEVSGIVLATSEKFPNFCAWRDEYCTQNEEYFPSRDELLIRYRAYIQPVDASK.

A GST N-terminal domain is found at A2–S81. Glutathione contacts are provided by residues S12, K39, I53, and E65–S66. The GST C-terminal domain occupies D86–I210.

This sequence belongs to the GST superfamily. HSP26 family.

It carries out the reaction RX + glutathione = an S-substituted glutathione + a halide anion + H(+). This Solanum tuberosum (Potato) protein is Probable glutathione S-transferase (PRP1).